The chain runs to 576 residues: Nuclear receptor subfamily 1 group D member 2 (576 aa).

Residues 1 to 60 (MELNAGGVIAYISSSSSASSPASCHSEGSENSFQSSSSSVPSSPNSSNCDANGNPKNADI) form a required for phosphorylation by CSNK1E and cytoplasmic localization region. The modulating stretch occupies residues 1 to 99 (MELNAGGVIA…HSGMTKFSGM (99 aa)). Residues 13–47 (SSSSSASSPASCHSEGSENSFQSSSSSVPSSPNSS) are compositionally biased toward low complexity. The segment at 13 to 90 (SSSSSASSPA…TSAPGMTKSH (78 aa)) is disordered. Ser46 is subject to Phosphoserine; by GSK3-beta. A DNA-binding region (nuclear receptor) is located at residues 100–176 (VLLCKVCGDV…VGMSRDAVRF (77 aa)). NR C4-type zinc fingers lie at residues 103–123 (CKVCGDVASGFHYGVHACEGC) and 140–164 (CLKNENCSIMRMNRNRCQQCRFKKC). 2 positions are modified to N6-acetyllysine; by KAT5: Lys162 and Lys163. Disordered stretches follow at residues 215–246 (QHDQSALPAQEQLRPKSQLEQENIKNTPSDFA) and 263–282 (LYNQEHRENSSESMPPQRGE). Basic and acidic residues-rich tracts occupy residues 227–237 (LRPKSQLEQEN) and 263–272 (LYNQEHRENS). Intrachain disulfides connect Cys334-Cys340 and Cys371-Cys381. One can recognise an NR LBD domain in the interval 366–576 (RNSYLCNTGG…EELLAFKVHP (211 aa)). Heme contacts are provided by Cys381 and His565. Residues 394 to 576 (SGHEIWEEFS…EELLAFKVHP (183 aa)) form an interaction with ZNHIT1 region.

This sequence belongs to the nuclear hormone receptor family. NR1 subfamily. As to quaternary structure, binds DNA as a monomer or a homodimer. Interacts with NCOA5 coactivator, leading to a strong increase of transcription of target genes. Interacts (via N-terminus) with KAT5. Interacts (via C-terminus) with HDAC1. Interacts with ZNHIT1. Interacts with SIAH2. Deacetylated by HDAC1. Acetylation and deacetylation regulate its transcriptional regulatory activity. In terms of processing, under more reducing intracellular redox conditions, Cys-381 is in its heme-bound state, which is optimal for recruitment of the NCOR1/HDAC3 corepressor complex and repression of target genes. When subjected to oxidative stress conditions, Cys-381 undergoes oxidation to form a disulfide bridge with Cys-371, also triggering a ligand switch that results in release of bound heme and derepression of target genes. Post-translationally, ubiquitinated by SIAH2; leading to its proteasomal degradation. Phosphorylated by CSNK1E; phosphorylation enhances its cytoplasmic localization. In terms of tissue distribution, ubiquitous. Expressed abundantly in skeletal muscle and brown adipose tissue. Expressed during skeletal muscle myogenesis.

The protein localises to the nucleus. It localises to the cytoplasm. The heme-bound form can bind gaseous signaling molecules such as CO and nitric oxide (NO) and NO can reverse its transcriptional repressor activity. Its function is as follows. Transcriptional repressor which coordinates circadian rhythm and metabolic pathways in a heme-dependent manner. Integral component of the complex transcription machinery that governs circadian rhythmicity and forms a critical negative limb of the circadian clock by directly repressing the expression of core clock components BMAL1 and CLOCK. Also regulates genes involved in metabolic functions, including lipid metabolism and the inflammatory response. Acts as a receptor for heme which stimulates its interaction with the NCOR1/HDAC3 corepressor complex, enhancing transcriptional repression. Recognizes two classes of DNA response elements within the promoter of its target genes and can bind to DNA as either monomers or homodimers, depending on the nature of the response element. Binds as a monomer to a response element composed of the consensus half-site motif 5'-[A/G]GGTCA-3' preceded by an A/T-rich 5' sequence (RevRE), or as a homodimer to a direct repeat of the core motif spaced by two nuclegotides (RevDR-2). Acts as a potent competitive repressor of ROR alpha (RORA) function and also negatively regulates the expression of NR1D1. Regulates lipid and energy homeostasis in the skeletal muscle via repression of genes involved in lipid metabolism and myogenesis including: CD36, FABP3, FABP4, UCP3, SCD1 and MSTN. Regulates hepatic lipid metabolism via the repression of APOC3. Represses gene expression at a distance in macrophages by inhibiting the transcription of enhancer-derived RNAs (eRNAs). In addition to its activity as a repressor, can also act as a transcriptional activator. Acts as a transcriptional activator of the sterol regulatory element-binding protein 1 (SREBF1) and the inflammatory mediator interleukin-6 (IL6) in the skeletal muscle. Plays a role in the regulation of circadian sleep/wake cycle; essential for maintaining wakefulness during the dark phase or active period. Key regulator of skeletal muscle mitochondrial function; negatively regulates the skeletal muscle expression of core clock genes and genes involved in mitochondrial biogenesis, fatty acid beta-oxidation and lipid metabolism. May play a role in the circadian control of neutrophilic inflammation in the lung. This is Nuclear receptor subfamily 1 group D member 2 from Mus musculus (Mouse).